The primary structure comprises 627 residues: Putative ankyrin repeat protein L122 (627 aa).

ANK repeat units lie at residues 61 to 94 (KGWT…DVHI), 98 to 130 (KGRT…DINS), 153 to 186 (HACY…DPNI), 190 to 223 (YGKT…NANH), 228 to 259 (AETV…DINH), 263 to 296 (IGFT…NINL), 300 to 333 (DGFT…DIND), 337 to 370 (NNVT…DLEI), 374 to 407 (YDWT…NVNV), 411 to 444 (LGHT…NPNL), 448 to 480 (DKNT…DSNT), and 491 to 523 (REYN…NYSD).

This is Putative ankyrin repeat protein L122 from Acanthamoeba polyphaga (Amoeba).